The primary structure comprises 875 residues: Valine--tRNA ligase (875 aa).

The 'HIGH' region motif lies at 41–51 (PNVTGSLHMGH). Residues 525 to 529 (KMSKS) carry the 'KMSKS' region motif. Lys528 serves as a coordination point for ATP. Residues 810–875 (VDLELIKKNL…ERISITIKGL (66 aa)) adopt a coiled-coil conformation.

It belongs to the class-I aminoacyl-tRNA synthetase family. ValS type 1 subfamily. Monomer.

The protein localises to the cytoplasm. The catalysed reaction is tRNA(Val) + L-valine + ATP = L-valyl-tRNA(Val) + AMP + diphosphate. Its function is as follows. Catalyzes the attachment of valine to tRNA(Val). As ValRS can inadvertently accommodate and process structurally similar amino acids such as threonine, to avoid such errors, it has a 'posttransfer' editing activity that hydrolyzes mischarged Thr-tRNA(Val) in a tRNA-dependent manner. This is Valine--tRNA ligase from Pelagibacter ubique (strain HTCC1062).